Consider the following 537-residue polypeptide: 2-succinyl-5-enolpyruvyl-6-hydroxy-3-cyclohexene-1-carboxylate synthase (537 aa).

Belongs to the TPP enzyme family. MenD subfamily. As to quaternary structure, homodimer. Requires Mg(2+) as cofactor. It depends on Mn(2+) as a cofactor. Thiamine diphosphate serves as cofactor.

It catalyses the reaction isochorismate + 2-oxoglutarate + H(+) = 5-enolpyruvoyl-6-hydroxy-2-succinyl-cyclohex-3-ene-1-carboxylate + CO2. It functions in the pathway quinol/quinone metabolism; 1,4-dihydroxy-2-naphthoate biosynthesis; 1,4-dihydroxy-2-naphthoate from chorismate: step 2/7. Its pathway is quinol/quinone metabolism; menaquinone biosynthesis. In terms of biological role, catalyzes the thiamine diphosphate-dependent decarboxylation of 2-oxoglutarate and the subsequent addition of the resulting succinic semialdehyde-thiamine pyrophosphate anion to isochorismate to yield 2-succinyl-5-enolpyruvyl-6-hydroxy-3-cyclohexene-1-carboxylate (SEPHCHC). In Dechloromonas aromatica (strain RCB), this protein is 2-succinyl-5-enolpyruvyl-6-hydroxy-3-cyclohexene-1-carboxylate synthase.